We begin with the raw amino-acid sequence, 50 residues long: uncharacterized protein (50 aa).

This is an uncharacterized protein from His1 virus (isolate Australia/Victoria) (His1V).